A 209-amino-acid polypeptide reads, in one-letter code: MSSQYSNVENLSPQTIRQVMRELQEMETTPPEGIKVLINESDVTDIQALIDGPAGTPYAAGVFRVKLTLNKDFPQTPPKAYFLTKIFHPNVAANGEICVNTLKKDWKPDLGIKHILLTIKCLLIVPNPESALNEEAGKMLLERYDDYSQRARMMTEIHAQPAKCGAGAHGDDKDDDGPSTKKHAGLDKKLQDKKKEKLLKEKKRMLKRL.

Residues 14 to 160 (QTIRQVMREL…ARMMTEIHAQ (147 aa)) enclose the UBC core domain. C98 serves as the catalytic Glycyl thioester intermediate. Residues 162–209 (AKCGAGAHGDDKDDDGPSTKKHAGLDKKLQDKKKEKLLKEKKRMLKRL) form a disordered region. Residues 169-199 (HGDDKDDDGPSTKKHAGLDKKLQDKKKEKLL) are compositionally biased toward basic and acidic residues. Positions 200-209 (KEKKRMLKRL) are enriched in basic residues.

Belongs to the ubiquitin-conjugating enzyme family.

It carries out the reaction S-ubiquitinyl-[E1 ubiquitin-activating enzyme]-L-cysteine + [E2 ubiquitin-conjugating enzyme]-L-cysteine = [E1 ubiquitin-activating enzyme]-L-cysteine + S-ubiquitinyl-[E2 ubiquitin-conjugating enzyme]-L-cysteine.. It participates in protein modification; protein ubiquitination. Catalyzes the covalent attachment of ubiquitin to other proteins. Acts as an essential factor of the anaphase promoting complex/cyclosome (APC/C), a cell cycle-regulated ubiquitin ligase that controls progression through mitosis. Acts by specifically elongating polyubiquitin chains initiated by the E2 enzyme vih/UbcH10 on APC/C substrates, enhancing the degradation of APC/C substrates by the proteasome and promoting mitotic exit. The protein is Ubiquitin-conjugating enzyme E2 S of Drosophila erecta (Fruit fly).